Reading from the N-terminus, the 560-residue chain is Mannosyl-oligosaccharide 1,2-alpha-mannosidase MNS1 (560 aa).

The Cytoplasmic portion of the chain corresponds to Met-1–Arg-27. Residues Leu-28 to Asn-47 traverse the membrane as a helical; Signal-anchor for type II membrane protein segment. Residues Asn-47–Lys-80 adopt a coiled-coil conformation. The Lumenal portion of the chain corresponds to Leu-48 to Val-560. Glu-179 (proton donor) is an active-site residue. Residue Asp-312 is part of the active site. Asn-326 is a glycosylation site (N-linked (GlcNAc...) asparagine). Cys-377 and Cys-409 are disulfide-bonded. Glu-423 acts as the Proton donor in catalysis. Glu-445 is a catalytic residue. Residue Asn-459 is glycosylated (N-linked (GlcNAc...) asparagine). Thr-529 contributes to the Ca(2+) binding site.

Belongs to the glycosyl hydrolase 47 family. Ca(2+) serves as cofactor. Requires Mn(2+) as cofactor. The cofactor is Mg(2+). Expressed in flowers, siliques, stems, leaves, roots, pollen grains, shoot apical meristems, hypocotyls and upper region of the root.

The protein resides in the golgi apparatus membrane. It carries out the reaction N(4)-(alpha-D-Man-(1-&gt;2)-alpha-D-Man-(1-&gt;2)-alpha-D-Man-(1-&gt;3)-[alpha-D-Man-(1-&gt;2)-alpha-D-Man-(1-&gt;3)-[alpha-D-Man-(1-&gt;2)-alpha-D-Man-(1-&gt;6)]-alpha-D-Man-(1-&gt;6)]-beta-D-Man-(1-&gt;4)-beta-D-GlcNAc-(1-&gt;4)-beta-D-GlcNAc)-L-asparaginyl-[protein] (N-glucan mannose isomer 9A1,2,3B1,2,3) + 4 H2O = N(4)-(alpha-D-Man-(1-&gt;3)-[alpha-D-Man-(1-&gt;3)-[alpha-D-Man-(1-&gt;6)]-alpha-D-Man-(1-&gt;6)]-beta-D-Man-(1-&gt;4)-beta-D-GlcNAc-(1-&gt;4)-beta-D-GlcNAc)-L-asparaginyl-[protein] (N-glucan mannose isomer 5A1,2) + 4 beta-D-mannose. It catalyses the reaction N(4)-(alpha-D-Man-(1-&gt;2)-alpha-D-Man-(1-&gt;2)-alpha-D-Man-(1-&gt;3)-[alpha-D-Man-(1-&gt;3)-[alpha-D-Man-(1-&gt;2)-alpha-D-Man-(1-&gt;6)]-alpha-D-Man-(1-&gt;6)]-beta-D-Man-(1-&gt;4)-beta-D-GlcNAc-(1-&gt;4)-beta-D-GlcNAc)-L-asparaginyl-[protein] (N-glucan mannose isomer 8A1,2,3B1,3) + 3 H2O = N(4)-(alpha-D-Man-(1-&gt;3)-[alpha-D-Man-(1-&gt;3)-[alpha-D-Man-(1-&gt;6)]-alpha-D-Man-(1-&gt;6)]-beta-D-Man-(1-&gt;4)-beta-D-GlcNAc-(1-&gt;4)-beta-D-GlcNAc)-L-asparaginyl-[protein] (N-glucan mannose isomer 5A1,2) + 3 beta-D-mannose. The enzyme catalyses N(4)-(alpha-D-Man-(1-&gt;2)-alpha-D-Man-(1-&gt;2)-alpha-D-Man-(1-&gt;3)-[alpha-D-Man-(1-&gt;2)-alpha-D-Man-(1-&gt;3)-[alpha-D-Man-(1-&gt;2)-alpha-D-Man-(1-&gt;6)]-alpha-D-Man-(1-&gt;6)]-beta-D-Man-(1-&gt;4)-beta-D-GlcNAc-(1-&gt;4)-beta-D-GlcNAc)-L-asparaginyl-[protein] (N-glucan mannose isomer 9A1,2,3B1,2,3) + H2O = N(4)-(alpha-D-Man-(1-&gt;2)-alpha-D-Man-(1-&gt;2)-alpha-D-Man-(1-&gt;3)-[alpha-D-Man-(1-&gt;3)-[alpha-D-Man-(1-&gt;2)-alpha-D-Man-(1-&gt;6)]-alpha-D-Man-(1-&gt;6)]-beta-D-Man-(1-&gt;4)-beta-D-GlcNAc-(1-&gt;4)-beta-D-GlcNAc)-L-asparaginyl-[protein] (N-glucan mannose isomer 8A1,2,3B1,3) + beta-D-mannose. The protein operates within protein modification; protein glycosylation. Its activity is regulated as follows. Inhibited by kifunensine and 1-deoxymannojirimycin, but not by swainsonine. Its function is as follows. Class I alpha-mannosidase essential for early N-glycan processing. Progressively trims alpha-1,2-linked mannose residues. Produces Man(5)GlcNAc(2) from Man(8)GlcNAc(2), but only Man(6)GlcNAc(2) from Man(9)GlcNAc(2). Has difficulty acting on the terminal mannose of the b-branch. Involved in root development and cell wall biosynthesis. The sequence is that of Mannosyl-oligosaccharide 1,2-alpha-mannosidase MNS1 (MNS1) from Arabidopsis thaliana (Mouse-ear cress).